The chain runs to 743 residues: Protein will decrease acetylation (743 aa).

WD repeat units lie at residues 389–428, 493–524, 535–576, 577–618, 619–660, and 661–702; these read ERSR…CRGK, LRGH…MRCW, YRSH…ALII, YAGH…LMRV, FADC…QLAE, and LKDH…PMSD.

This sequence belongs to the WD repeat TAF5 family. As to quaternary structure, component of the Spt-Ada-Gcn5 acetyltransferase (SAGA) complex consisting of wda/Taf5L, Saf6, Taf9, Taf10b, Taf12, Ada1, Spt3, Spt7, Spt20, Sf3b3, Sf3b5, Nipped-A/Tra1, a histone acetyltransferase (HAT) module made up of Gcn5, Ada2b (Isoform B), Ada3 and Sgf29, and a deubiquitinase (DUB) module made up of not/nonstop, Sgf11 and e(y)2 tethered to SAGA by Atxn7. Not essential for the assembly or integrity of the SAGA complex. Not a component of the Ada2a-containing ATAC complex.

The protein localises to the nucleus. It localises to the chromosome. Its function is as follows. Component of the transcription regulatory complex SAGA, a multiprotein complex that activates transcription by remodeling chromatin and mediating histone acetylation and deubiquitination. The SAGA complex predominantly acetylates histone H3. Involved in acetylation of histone H3 on 'Lys-10' (H3K9ac) by the SAGA complex in the larval central nervous system. Involved in SAGA complex coactivator functions. Required for oogenesis. This Drosophila melanogaster (Fruit fly) protein is Protein will decrease acetylation.